Here is a 189-residue protein sequence, read N- to C-terminus: MLSASENRFEIDLDLVFHSYQDAHLINNIFFNNEALWRSNLKVWIDYVRRNDNYLCPAIVRSVNCLSIGLQFTDDKSIMKINQQWRAKEEPTDVLSFPVIDQDSIAPPPNHFLELGDIIVSVQTAQKQADENNHSLDKELCWLVSHGLLHLLGWDHLNEHSLDQMLSFQDKLLQINHDSQIAVSRGLQP.

Histidine 146, histidine 150, and histidine 156 together coordinate Zn(2+).

The protein belongs to the endoribonuclease YbeY family. Zn(2+) serves as cofactor.

Its subcellular location is the cytoplasm. Single strand-specific metallo-endoribonuclease involved in late-stage 70S ribosome quality control and in maturation of the 3' terminus of the 16S rRNA. This chain is Endoribonuclease YbeY, found in Prochlorococcus marinus (strain MIT 9211).